The following is a 357-amino-acid chain: Chorismate synthase (357 aa).

Arg-47 contributes to the NADP(+) binding site. Residues 123 to 125, Gly-281, 296 to 300, and Arg-324 each bind FMN; these read RSS and KPTSS.

Belongs to the chorismate synthase family. In terms of assembly, homotetramer. The cofactor is FMNH2.

The enzyme catalyses 5-O-(1-carboxyvinyl)-3-phosphoshikimate = chorismate + phosphate. It participates in metabolic intermediate biosynthesis; chorismate biosynthesis; chorismate from D-erythrose 4-phosphate and phosphoenolpyruvate: step 7/7. Functionally, catalyzes the anti-1,4-elimination of the C-3 phosphate and the C-6 proR hydrogen from 5-enolpyruvylshikimate-3-phosphate (EPSP) to yield chorismate, which is the branch point compound that serves as the starting substrate for the three terminal pathways of aromatic amino acid biosynthesis. This reaction introduces a second double bond into the aromatic ring system. The protein is Chorismate synthase of Chlamydia muridarum (strain MoPn / Nigg).